The sequence spans 246 residues: Small ribosomal subunit protein uS3 (246 aa).

Residues 38–106 (IRQYLNARLA…DVQINIYEIR (69 aa)) form the KH type-2 domain. Positions 218–246 (VAKNQSRRPNAQGGNNRGGDRNRRRKGNR) are disordered.

This sequence belongs to the universal ribosomal protein uS3 family. In terms of assembly, part of the 30S ribosomal subunit. Forms a tight complex with proteins S10 and S14.

Its function is as follows. Binds the lower part of the 30S subunit head. Binds mRNA in the 70S ribosome, positioning it for translation. The chain is Small ribosomal subunit protein uS3 from Porphyromonas gingivalis (strain ATCC 33277 / DSM 20709 / CIP 103683 / JCM 12257 / NCTC 11834 / 2561).